The sequence spans 221 residues: Pyridoxine/pyridoxamine 5'-phosphate oxidase (221 aa).

A disordered region spans residues 1–21 (MDYSDPAELRESYDGAPLDPR). Substrate is bound by residues 10-13 (RESY) and Lys-68. FMN is bound by residues 63–68 (RTVLLK), 78–79 (FT), Arg-84, Lys-85, and Gln-107. Residues Tyr-125, Arg-129, and Ser-133 each coordinate substrate. Residues 143-144 (QS) and Trp-189 each bind FMN. Residue 195–197 (RMH) participates in substrate binding. Residue Arg-199 coordinates FMN.

It belongs to the pyridoxamine 5'-phosphate oxidase family. In terms of assembly, homodimer. Requires FMN as cofactor.

It carries out the reaction pyridoxamine 5'-phosphate + O2 + H2O = pyridoxal 5'-phosphate + H2O2 + NH4(+). The enzyme catalyses pyridoxine 5'-phosphate + O2 = pyridoxal 5'-phosphate + H2O2. The protein operates within cofactor metabolism; pyridoxal 5'-phosphate salvage; pyridoxal 5'-phosphate from pyridoxamine 5'-phosphate: step 1/1. Its pathway is cofactor metabolism; pyridoxal 5'-phosphate salvage; pyridoxal 5'-phosphate from pyridoxine 5'-phosphate: step 1/1. Functionally, catalyzes the oxidation of either pyridoxine 5'-phosphate (PNP) or pyridoxamine 5'-phosphate (PMP) into pyridoxal 5'-phosphate (PLP). This Thermobifida fusca (strain YX) protein is Pyridoxine/pyridoxamine 5'-phosphate oxidase.